A 252-amino-acid chain; its full sequence is Tumor necrosis factor ligand superfamily member 15 (252 aa).

The Cytoplasmic segment spans residues 1–39; it reads MAEELGLGFGEGVPVEVLPEGCRHRPEARAGLAARSKAC. Residues 40–60 form a helical; Signal-anchor for type II membrane protein membrane-spanning segment; the sequence is LALTCCLLSFPILAGLSTLLM. Topologically, residues 61–252 are extracellular; that stretch reads AGQLRVPGKD…DKTFFGAFLL (192 aa). The THD domain maps to 96 to 252; the sequence is PRAHLTIKKQ…DKTFFGAFLL (157 aa). Asn137 is a glycosylation site (N-linked (GlcNAc...) asparagine). An intrachain disulfide couples Cys163 to Cys203. N-linked (GlcNAc...) asparagine glycosylation is present at Asn230.

It belongs to the tumor necrosis factor family. As to quaternary structure, homotrimer.

The protein localises to the membrane. Its function is as follows. Receptor for TNFRSF25 and TNFRSF6B. Mediates activation of NF-kappa-B. Inhibits vascular endothelial growth and angiogenesis (in vitro). Promotes activation of caspases and apoptosis. Promotes splenocyte alloactivation. This Mus musculus (Mouse) protein is Tumor necrosis factor ligand superfamily member 15 (Tnfsf15).